Here is a 155-residue protein sequence, read N- to C-terminus: 6,7-dimethyl-8-ribityllumazine synthase (155 aa).

Residues phenylalanine 18, 49–51 (ALE), and 75–77 (CVI) each bind 5-amino-6-(D-ribitylamino)uracil. (2S)-2-hydroxy-3-oxobutyl phosphate is bound at residue 80–81 (ET). Histidine 83 (proton donor) is an active-site residue. 5-amino-6-(D-ribitylamino)uracil is bound at residue asparagine 108. Residue arginine 122 participates in (2S)-2-hydroxy-3-oxobutyl phosphate binding.

Belongs to the DMRL synthase family.

The catalysed reaction is (2S)-2-hydroxy-3-oxobutyl phosphate + 5-amino-6-(D-ribitylamino)uracil = 6,7-dimethyl-8-(1-D-ribityl)lumazine + phosphate + 2 H2O + H(+). It functions in the pathway cofactor biosynthesis; riboflavin biosynthesis; riboflavin from 2-hydroxy-3-oxobutyl phosphate and 5-amino-6-(D-ribitylamino)uracil: step 1/2. Functionally, catalyzes the formation of 6,7-dimethyl-8-ribityllumazine by condensation of 5-amino-6-(D-ribitylamino)uracil with 3,4-dihydroxy-2-butanone 4-phosphate. This is the penultimate step in the biosynthesis of riboflavin. The sequence is that of 6,7-dimethyl-8-ribityllumazine synthase from Bartonella henselae (strain ATCC 49882 / DSM 28221 / CCUG 30454 / Houston 1) (Rochalimaea henselae).